An 881-amino-acid polypeptide reads, in one-letter code: EEF1AKMT4-ECE2 readthrough transcript protein (881 aa).

Residues 1–160 (MASPRTPVSP…VHTVDQVLSE (160 aa)) are methyltransferase-like region. Over 1 to 178 (MASPRTPVSP…QLFGSHTQLE (178 aa)) the chain is Cytoplasmic. Residues tryptophan 26 and tyrosine 30 each contribute to the S-adenosyl-L-methionine site. At tyrosine 39 the chain carries Phosphotyrosine. S-adenosyl-L-methionine is bound by residues tryptophan 41, glycine 66, 88-89 (DY), 113-114 (DV), and lysine 130. The residue at position 174 (histidine 174) is a Phosphoserine. Residues 179–199 (LVLAGLILVLAALLLGCLVAL) traverse the membrane as a helical; Signal-anchor for type II membrane protein segment. The Lumenal segment spans residues 200–881 (WVHRDPAHST…MNPGQLCEVW (682 aa)). In terms of domain architecture, Peptidase M13 spans 209 to 881 (TCVTEACIRV…MNPGQLCEVW (673 aa)). 5 cysteine pairs are disulfide-bonded: cysteine 210–cysteine 215, cysteine 233–cysteine 866, cysteine 241–cysteine 826, cysteine 297–cysteine 546, and cysteine 755–cysteine 878. Residues asparagine 277, asparagine 281, asparagine 322, asparagine 382, asparagine 427, asparagine 494, and asparagine 650 are each glycosylated (N-linked (GlcNAc...) asparagine). Zn(2+) is bound at residue histidine 718. Glutamate 719 is an active-site residue. Histidine 722 is a binding site for Zn(2+). Residues asparagine 743 and asparagine 751 are each glycosylated (N-linked (GlcNAc...) asparagine). Glutamate 778 contacts Zn(2+). The active-site Proton donor is the aspartate 782.

It in the N-terminal section; belongs to the methyltransferase superfamily. This sequence in the C-terminal section; belongs to the peptidase M13 family. The cofactor is Zn(2+). As to expression, expressed at high levels in central nervous system. Expressed in adrenal glands, ovary and uterus, and at low levels in heart.

The protein resides in the golgi apparatus membrane. The protein localises to the cytoplasmic vesicle. It localises to the secretory vesicle membrane. It carries out the reaction Hydrolysis of the 21-Trp-|-Val-22 bond in big endothelin to form endothelin 1.. Its activity is regulated as follows. Inhibited by phosphoramidon. Its function is as follows. Converts big endothelin-1 to endothelin-1. May also have methyltransferase activity. May play a role in amyloid-beta processing. The chain is EEF1AKMT4-ECE2 readthrough transcript protein from Mus musculus (Mouse).